Consider the following 220-residue polypeptide: Metalloproteinase inhibitor 2 (220 aa).

A signal peptide spans 1-26 (MPGAALPSLLAWLAVLLLGRARPADA). Residue Cys27 coordinates Zn(2+). 2 involved in metalloproteinase-binding regions span residues 27 to 30 (CSCS) and 95 to 96 (TE). Disulfide bonds link Cys27–Cys98, Cys29–Cys127, Cys39–Cys152, Cys154–Cys201, Cys159–Cys164, and Cys172–Cys193. One can recognise an NTR domain in the interval 27-152 (CSCSPIHPQQ…SLNQRYQMGC (126 aa)).

The protein belongs to the protease inhibitor I35 (TIMP) family. Post-translationally, the activity of TIMP2 is dependent on the presence of disulfide bonds.

Its subcellular location is the secreted. Its function is as follows. Complexes with metalloproteinases (such as collagenases) and irreversibly inactivates them by binding to their catalytic zinc cofactor. This chain is Metalloproteinase inhibitor 2 (TIMP2), found in Gallus gallus (Chicken).